We begin with the raw amino-acid sequence, 760 residues long: Leucine-rich repeat extensin-like protein 3 (760 aa).

The N-terminal stretch at 1–20 (MKKTIQILLFFFFLINLTNA) is a signal peptide. Asparagine 16 is a glycosylation site (N-linked (GlcNAc...) asparagine). The LRR 1 repeat unit spans residues 21-45 (LSISSDGGVLSDNEVRHIQRRQLLE). 2 N-linked (GlcNAc...) asparagine glycosylation sites follow: asparagine 86 and asparagine 98. 9 LRR repeats span residues 113-137 (IRTVAGIDLNHADIAGYLPEELGLL), 138-160 (SDLALFHVNSNRFCGTVPHRFNR), 161-185 (LKLLFELDLSNNRFAGKFPTVVLQL), 186-209 (PSLKFLDLRFNEFEGTVPKELFSK), 211-232 (LDAIFINHNRFRFELPENFGDS), 234-255 (VSVIVLANNRFHGCVPSSLVEM), 256-279 (KNLNEIIFMNNGLNSCLPSDIGRL), 281-303 (NVTVFDVSFNELVGPLPESVGEM), and 304-327 (VSVEQLNVAHNMLSGKIPASICQL). Asparagine 281 is a glycosylation site (N-linked (GlcNAc...) asparagine). A glycan (N-linked (GlcNAc...) asparagine) is linked at asparagine 332. 3 disordered regions span residues 389–502 (GRSV…PPPP), 515–610 (PPVY…YSPP), and 663–748 (PPPP…PVIG). Pro residues-rich tracts occupy residues 394 to 415 (PRPPVVTPLPPPSLPSPPPPAP) and 423 to 502 (LTSP…PPPP). Positions 409–758 (SPPPPAPIFS…VSYASPPPPP (350 aa)) are contains the Ser-Pro(4) repeats. A compositionally biased stretch (pro residues) spans 663–745 (PPPPVHYSSP…SPEYEGPLPP (83 aa)).

As to quaternary structure, interacts with SH3P1. Post-translationally, hydroxylated on proline residues in the S-P-P-P-P repeat. In terms of processing, O-glycosylated on hydroxyprolines. As to expression, expressed in roots, stems, leaves and flowers, mostly in vascular tissues.

Its subcellular location is the secreted. The protein localises to the cell wall. Modulates cell morphogenesis by regulating cell wall formation and assembly, and/or growth polarization. In Arabidopsis thaliana (Mouse-ear cress), this protein is Leucine-rich repeat extensin-like protein 3 (LRX3).